The sequence spans 289 residues: Cell division protein ZipA (289 aa).

Met1 is a topological domain (periplasmic). The helical transmembrane segment at Asp2–Phe22 threads the bilayer. Residues Asp23–Arg289 lie on the Cytoplasmic side of the membrane. A disordered region spans residues Arg66–Ala141. Basic and acidic residues predominate over residues Arg81 to Asp99. A compositionally biased stretch (acidic residues) spans Leu100–Asp114.

It belongs to the ZipA family. As to quaternary structure, interacts with FtsZ via their C-terminal domains.

The protein localises to the cell inner membrane. In terms of biological role, essential cell division protein that stabilizes the FtsZ protofilaments by cross-linking them and that serves as a cytoplasmic membrane anchor for the Z ring. Also required for the recruitment to the septal ring of downstream cell division proteins. This is Cell division protein ZipA from Pseudomonas aeruginosa (strain LESB58).